The primary structure comprises 222 residues: Prolactin-2C5 (222 aa).

Positions 1–29 (MLPSLIQPCSWILLLLLVNSSLLWKNVAS) are cleaved as a signal peptide. Cysteine 33 and cysteine 40 are joined by a disulfide. The N-linked (GlcNAc...) asparagine glycan is linked to asparagine 57. Cystine bridges form between cysteine 87/cysteine 197 and cysteine 214/cysteine 222.

Belongs to the somatotropin/prolactin family. Post-translationally, N-glycosylated and sialylated. As to expression, expressed in placenta (at protein level). Expressed in the tail hair follicle, with highest expression detected in the keratinocytes of the outer root sheath. Expressed in ear skin with lesser amounts in small intestine. Not detected in brain at 18 dpc, postnatal day 25 or postnatal day 55.

The protein localises to the secreted. The sequence is that of Prolactin-2C5 from Mus musculus (Mouse).